The primary structure comprises 153 residues: 6,7-dimethyl-8-ribityllumazine synthase (153 aa).

5-amino-6-(D-ribitylamino)uracil is bound by residues F23, 57–59 (AYE), and 81–83 (AVI). 86 to 87 (AT) contributes to the (2S)-2-hydroxy-3-oxobutyl phosphate binding site. Catalysis depends on H89, which acts as the Proton donor. 5-amino-6-(D-ribitylamino)uracil is bound at residue F113. R127 is a (2S)-2-hydroxy-3-oxobutyl phosphate binding site.

The protein belongs to the DMRL synthase family.

It carries out the reaction (2S)-2-hydroxy-3-oxobutyl phosphate + 5-amino-6-(D-ribitylamino)uracil = 6,7-dimethyl-8-(1-D-ribityl)lumazine + phosphate + 2 H2O + H(+). It participates in cofactor biosynthesis; riboflavin biosynthesis; riboflavin from 2-hydroxy-3-oxobutyl phosphate and 5-amino-6-(D-ribitylamino)uracil: step 1/2. Catalyzes the formation of 6,7-dimethyl-8-ribityllumazine by condensation of 5-amino-6-(D-ribitylamino)uracil with 3,4-dihydroxy-2-butanone 4-phosphate. This is the penultimate step in the biosynthesis of riboflavin. This is 6,7-dimethyl-8-ribityllumazine synthase from Leptospira borgpetersenii serovar Hardjo-bovis (strain JB197).